A 736-amino-acid chain; its full sequence is ATP-dependent zinc metalloprotease FtsH (736 aa).

Disordered stretches follow at residues 1–39 (MDSNVDSQRVPDGQIFFRPVHPGISGKDMESGTSDGQQR) and 57–83 (QQTQNRTGFASADTKQGSPEGADRKKM). Residues 1 to 87 (MDSNVDSQRV…ADRKKMPPGK (87 aa)) lie on the Cytoplasmic side of the membrane. Residues 57–73 (QQTQNRTGFASADTKQG) are compositionally biased toward polar residues. A helical transmembrane segment spans residues 88 to 108 (AWLWFVLILIVNFLMVRLLIP). Over 109–205 (DAEQPVMVPY…KPIHEERSPW (97 aa)) the chain is Periplasmic. Residues 206-226 (ATIVYSFGPGLLFIAFYIWLF) form a helical membrane-spanning segment. Residues 227 to 736 (RRMAQQGGLG…VSLPGVAGPS (510 aa)) lie on the Cytoplasmic side of the membrane. Residue 301–308 (GAPGTGKT) coordinates ATP. H522 provides a ligand contact to Zn(2+). Residue E523 is part of the active site. Positions 526 and 598 each coordinate Zn(2+). The segment at 706-736 (PALDAGKLPVPDGGDKNAEPSVSLPGVAGPS) is disordered.

This sequence in the central section; belongs to the AAA ATPase family. In the C-terminal section; belongs to the peptidase M41 family. In terms of assembly, homohexamer. It depends on Zn(2+) as a cofactor.

The protein localises to the cell inner membrane. In terms of biological role, acts as a processive, ATP-dependent zinc metallopeptidase for both cytoplasmic and membrane proteins. Plays a role in the quality control of integral membrane proteins. This Syntrophus aciditrophicus (strain SB) protein is ATP-dependent zinc metalloprotease FtsH.